Here is a 119-residue protein sequence, read N- to C-terminus: Protein ELF4-LIKE 2 (119 aa).

Residues 91–119 (SVDASSEGESTGTLKSDGKANNQKRFRSG) are disordered. Residues 93-111 (DASSEGESTGTLKSDGKAN) show a composition bias toward polar residues.

Belongs to the EARLY FLOWERING 4 family. In terms of assembly, homodimer.

The protein resides in the nucleus. Functionally, component of the central CCA1/LHY-TOC1 feedback loop in the circadian clock that promotes clock accuracy and is required for sustained rhythms in the absence of daily light/dark cycles. This chain is Protein ELF4-LIKE 2 (EFL2), found in Arabidopsis thaliana (Mouse-ear cress).